The chain runs to 393 residues: uncharacterized protein (393 aa).

Helical transmembrane passes span 15–35 (IVAF…VTIF), 56–76 (WGWI…NVII), 86–106 (FYAS…FQIV), 131–151 (AVLI…LITW), 176–196 (LSLT…VIAF), 253–273 (LLAN…VFMI), 289–309 (LIDL…IPVA), and 349–369 (VYLP…QVIW).

It is found in the cell membrane. This is an uncharacterized protein from Mycoplasma genitalium (strain ATCC 33530 / DSM 19775 / NCTC 10195 / G37) (Mycoplasmoides genitalium).